The following is a 186-amino-acid chain: Elongation factor P (186 aa).

This sequence belongs to the elongation factor P family.

Its subcellular location is the cytoplasm. The protein operates within protein biosynthesis; polypeptide chain elongation. Its function is as follows. Involved in peptide bond synthesis. Stimulates efficient translation and peptide-bond synthesis on native or reconstituted 70S ribosomes in vitro. Probably functions indirectly by altering the affinity of the ribosome for aminoacyl-tRNA, thus increasing their reactivity as acceptors for peptidyl transferase. The sequence is that of Elongation factor P from Brucella abortus (strain S19).